A 261-amino-acid chain; its full sequence is Thiamine thiazole synthase (261 aa).

Residues Ala33, 52–53 (ER), Gly60, Val124, and 152–154 (HVD) contribute to the NAD(+) site. Asp154 and His169 together coordinate Fe cation. Position 219 (Ile219) interacts with NAD(+). Arg229 lines the glycine pocket.

Belongs to the THI4 family. In terms of assembly, homooctamer; tetramer of dimers. It depends on Fe(2+) as a cofactor.

The catalysed reaction is hydrogen sulfide + glycine + NAD(+) = ADP-5-ethyl-4-methylthiazole-2-carboxylate + nicotinamide + 3 H2O + H(+). Its pathway is cofactor biosynthesis; thiamine diphosphate biosynthesis. Its function is as follows. Involved in the biosynthesis of the thiazole moiety of thiamine. Catalyzes the conversion of NAD and glycine to adenosine diphosphate 5-(2-hydroxyethyl)-4-methylthiazole-2-carboxylate (ADT), an adenylated thiazole intermediate, using free sulfide as a source of sulfur. The sequence is that of Thiamine thiazole synthase from Pyrobaculum calidifontis (strain DSM 21063 / JCM 11548 / VA1).